We begin with the raw amino-acid sequence, 324 residues long: DNA-directed RNA polymerase subunit alpha (324 aa).

The alpha N-terminal domain (alpha-NTD) stretch occupies residues 1-228 (MIEIQKPTIR…EHFNLFTDLS (228 aa)). The interval 245–324 (RNKLLDMTIE…STPKGEEEEK (80 aa)) is alpha C-terminal domain (alpha-CTD).

It belongs to the RNA polymerase alpha chain family. As to quaternary structure, homodimer. The RNAP catalytic core consists of 2 alpha, 1 beta, 1 beta' and 1 omega subunit. When a sigma factor is associated with the core the holoenzyme is formed, which can initiate transcription.

The catalysed reaction is RNA(n) + a ribonucleoside 5'-triphosphate = RNA(n+1) + diphosphate. Functionally, DNA-dependent RNA polymerase catalyzes the transcription of DNA into RNA using the four ribonucleoside triphosphates as substrates. This chain is DNA-directed RNA polymerase subunit alpha, found in Caldicellulosiruptor saccharolyticus (strain ATCC 43494 / DSM 8903 / Tp8T 6331).